Reading from the N-terminus, the 85-residue chain is Serine protease inhibitor Cvsi-2 (85 aa).

Positions 1 to 18 are cleaved as a signal peptide; sequence MKVAVVVALLCFVCYTAA.

In terms of processing, contains 6 disulfide bonds. Detected in hemolymph (at protein level). Within the digestive gland expression is limited to the basophil cells of the digestive diverticula.

It localises to the secreted. Its function is as follows. Slow-binding inhibitor of serine proteases. The inhibitor rapidly binds to the protease forming a weak enzyme-inhibitor complex, and this is followed by a slow isomerization forming a tight-binding enzyme-inhibitor complex. Active against subtilisin A with a dissociation constant of 0.18 nM. Active against perkinsin. Not active against thermolysin, papain or pepsin. This chain is Serine protease inhibitor Cvsi-2, found in Crassostrea virginica (Eastern oyster).